A 194-amino-acid chain; its full sequence is Phosphoheptose isomerase (194 aa).

Residues 37–194 (ISNSFKQGGK…LIEFEMAKQA (158 aa)) enclose the SIS domain. Residue 52–54 (NGG) coordinates substrate. 2 residues coordinate Zn(2+): His61 and Glu65. Substrate-binding positions include Glu65, 93–94 (ND), 119–121 (STS), Ser124, and Gln172. Residues Gln172 and His180 each contribute to the Zn(2+) site.

The protein belongs to the SIS family. GmhA subfamily. Homotetramer. Zn(2+) is required as a cofactor.

The protein localises to the cytoplasm. The enzyme catalyses 2 D-sedoheptulose 7-phosphate = D-glycero-alpha-D-manno-heptose 7-phosphate + D-glycero-beta-D-manno-heptose 7-phosphate. It functions in the pathway carbohydrate biosynthesis; D-glycero-D-manno-heptose 7-phosphate biosynthesis; D-glycero-alpha-D-manno-heptose 7-phosphate and D-glycero-beta-D-manno-heptose 7-phosphate from sedoheptulose 7-phosphate: step 1/1. The protein operates within bacterial outer membrane biogenesis; LOS core biosynthesis. Catalyzes the isomerization of sedoheptulose 7-phosphate in D-glycero-D-manno-heptose 7-phosphate. This Haemophilus influenzae (strain ATCC 51907 / DSM 11121 / KW20 / Rd) protein is Phosphoheptose isomerase.